The primary structure comprises 259 residues: 7-cyano-7-deazaguanine synthase (259 aa).

ATP is bound at residue Leu32 to Leu42. 4 residues coordinate Zn(2+): Cys223, Cys233, Cys236, and Cys239.

This sequence belongs to the QueC family. Requires Zn(2+) as cofactor.

The enzyme catalyses 7-carboxy-7-deazaguanine + NH4(+) + ATP = 7-cyano-7-deazaguanine + ADP + phosphate + H2O + H(+). It functions in the pathway purine metabolism; 7-cyano-7-deazaguanine biosynthesis. Functionally, catalyzes the ATP-dependent conversion of 7-carboxy-7-deazaguanine (CDG) to 7-cyano-7-deazaguanine (preQ(0)). The sequence is that of 7-cyano-7-deazaguanine synthase from Psychrobacter cryohalolentis (strain ATCC BAA-1226 / DSM 17306 / VKM B-2378 / K5).